Reading from the N-terminus, the 222-residue chain is Salivary anticoagulant protein P23 (222 aa).

The N-terminal stretch at 1–17 is a signal peptide; sequence MLTVSLLTLSLAAYASA. N-linked (GlcNAc...) asparagine glycans are attached at residues Asn56, Asn73, Asn109, and Asn114.

As to expression, salivary gland (at protein level). Adult midgut.

The protein resides in the secreted. Functionally, inhibits host coagulation by delaying thrombin generation and reducing endogenous thrombin potential (ETP). The protein is Salivary anticoagulant protein P23 of Ixodes scapularis (Black-legged tick).